A 132-amino-acid chain; its full sequence is PGA2-homolog C27.01c (132 aa).

Residues 17–34 (WIRIIVYVGGYMLIRPYL) traverse the membrane as a helical segment. Disordered regions lie at residues 50 to 90 (LLEG…DAEF) and 106 to 132 (EYFK…HLED). A compositionally biased stretch (basic and acidic residues) spans 62 to 75 (EMTHGTKPKEHGEF). The segment covering 76–87 (DTDDEEEEENPD) has biased composition (acidic residues). The residue at position 77 (threonine 77) is a Phosphothreonine. Over residues 106-115 (EYFKNQDKSP) the composition is skewed to basic and acidic residues. Residues 119 to 132 (YADDDEDIEEHLED) are compositionally biased toward acidic residues.

The protein belongs to the PGA2 family.

The protein localises to the endoplasmic reticulum membrane. The protein resides in the nucleus membrane. In terms of biological role, involved processing and trafficking glycosylated proteins. This is PGA2-homolog C27.01c from Schizosaccharomyces pombe (strain 972 / ATCC 24843) (Fission yeast).